A 344-amino-acid chain; its full sequence is Biotin synthase (344 aa).

Positions 40 to 267 (AQVQVSTLLS…KSMVRLSAGR (228 aa)) constitute a Radical SAM core domain. 3 residues coordinate [4Fe-4S] cluster: Cys55, Cys59, and Cys62. [2Fe-2S] cluster contacts are provided by Cys99, Cys130, Cys190, and Arg262.

This sequence belongs to the radical SAM superfamily. Biotin synthase family. Homodimer. The cofactor is [4Fe-4S] cluster. [2Fe-2S] cluster is required as a cofactor.

It carries out the reaction (4R,5S)-dethiobiotin + (sulfur carrier)-SH + 2 reduced [2Fe-2S]-[ferredoxin] + 2 S-adenosyl-L-methionine = (sulfur carrier)-H + biotin + 2 5'-deoxyadenosine + 2 L-methionine + 2 oxidized [2Fe-2S]-[ferredoxin]. It participates in cofactor biosynthesis; biotin biosynthesis; biotin from 7,8-diaminononanoate: step 2/2. In terms of biological role, catalyzes the conversion of dethiobiotin (DTB) to biotin by the insertion of a sulfur atom into dethiobiotin via a radical-based mechanism. In Xanthomonas euvesicatoria pv. vesicatoria (strain 85-10) (Xanthomonas campestris pv. vesicatoria), this protein is Biotin synthase.